The sequence spans 545 residues: Esterase-5C (545 aa).

Residues 1-19 (MLAARLIILLSFYWLSASA) form the signal peptide. Cysteine 84 and cysteine 103 are joined by a disulfide. Asparagine 113 carries an N-linked (GlcNAc...) asparagine glycan. The Acyl-ester intermediate role is filled by serine 207. Cysteine 259 and cysteine 271 are disulfide-bonded. Asparagine 421 carries N-linked (GlcNAc...) asparagine glycosylation. Histidine 467 functions as the Charge relay system in the catalytic mechanism. N-linked (GlcNAc...) asparagine glycosylation is present at asparagine 507. Cysteine 515 and cysteine 536 are joined by a disulfide.

This sequence belongs to the type-B carboxylesterase/lipase family.

The protein resides in the secreted. The enzyme catalyses a carboxylic ester + H2O = an alcohol + a carboxylate + H(+). The chain is Esterase-5C (Est-5C) from Drosophila pseudoobscura pseudoobscura (Fruit fly).